The primary structure comprises 342 residues: tRNA N6-adenosine threonylcarbamoyltransferase (342 aa).

Residues H112 and H116 each contribute to the Fe cation site. Residues 134–138 (IVSGG), D167, G180, and N278 each bind substrate. Residue D306 participates in Fe cation binding.

It belongs to the KAE1 / TsaD family. The cofactor is Fe(2+).

Its subcellular location is the cytoplasm. It carries out the reaction L-threonylcarbamoyladenylate + adenosine(37) in tRNA = N(6)-L-threonylcarbamoyladenosine(37) in tRNA + AMP + H(+). Functionally, required for the formation of a threonylcarbamoyl group on adenosine at position 37 (t(6)A37) in tRNAs that read codons beginning with adenine. Is involved in the transfer of the threonylcarbamoyl moiety of threonylcarbamoyl-AMP (TC-AMP) to the N6 group of A37, together with TsaE and TsaB. TsaD likely plays a direct catalytic role in this reaction. The sequence is that of tRNA N6-adenosine threonylcarbamoyltransferase from Anaplasma phagocytophilum (strain HZ).